Consider the following 111-residue polypeptide: N-alpha-acetyltransferase 38-B, NatC auxiliary subunit (111 aa).

The region spanning 28–106 (TARHKLESLL…IVSIQVELET (79 aa)) is the Sm domain.

This sequence belongs to the snRNP Sm proteins family. In terms of assembly, component of the N-terminal acetyltransferase C (NatC) complex, which is composed of naa35, naa38 and naa30.

Its subcellular location is the cytoplasm. In terms of biological role, auxillary component of the N-terminal acetyltransferase C (NatC) complex which catalyzes acetylation of N-terminal methionine residues. The polypeptide is N-alpha-acetyltransferase 38-B, NatC auxiliary subunit (naa38-b) (Xenopus laevis (African clawed frog)).